We begin with the raw amino-acid sequence, 443 residues long: Probable glycine dehydrogenase (decarboxylating) subunit 1 (443 aa).

It belongs to the GcvP family. N-terminal subunit subfamily. As to quaternary structure, the glycine cleavage system is composed of four proteins: P, T, L and H. In this organism, the P 'protein' is a heterodimer of two subunits.

The catalysed reaction is N(6)-[(R)-lipoyl]-L-lysyl-[glycine-cleavage complex H protein] + glycine + H(+) = N(6)-[(R)-S(8)-aminomethyldihydrolipoyl]-L-lysyl-[glycine-cleavage complex H protein] + CO2. The glycine cleavage system catalyzes the degradation of glycine. The P protein binds the alpha-amino group of glycine through its pyridoxal phosphate cofactor; CO(2) is released and the remaining methylamine moiety is then transferred to the lipoamide cofactor of the H protein. This chain is Probable glycine dehydrogenase (decarboxylating) subunit 1, found in Chlorobium limicola (strain DSM 245 / NBRC 103803 / 6330).